The following is a 775-amino-acid chain: 5-methyltetrahydropteroyltriglutamate--homocysteine methyltransferase (775 aa).

Residues 16-19 (REMK) and lysine 115 each bind 5-methyltetrahydropteroyltri-L-glutamate. L-homocysteine is bound by residues 435-437 (IGS) and glutamate 488. L-methionine-binding positions include 435–437 (IGS) and glutamate 488. Residues 519 to 520 (RC) and tryptophan 565 contribute to the 5-methyltetrahydropteroyltri-L-glutamate site. Residue aspartate 603 participates in L-homocysteine binding. Aspartate 603 contributes to the L-methionine binding site. 5-methyltetrahydropteroyltri-L-glutamate is bound at residue glutamate 609. Zn(2+)-binding residues include histidine 645, cysteine 647, and glutamate 669. The Proton donor role is filled by histidine 698. Residue cysteine 730 participates in Zn(2+) binding.

This sequence belongs to the vitamin-B12 independent methionine synthase family. It depends on Zn(2+) as a cofactor.

The enzyme catalyses 5-methyltetrahydropteroyltri-L-glutamate + L-homocysteine = tetrahydropteroyltri-L-glutamate + L-methionine. The protein operates within amino-acid biosynthesis; L-methionine biosynthesis via de novo pathway; L-methionine from L-homocysteine (MetE route): step 1/1. Functionally, catalyzes the transfer of a methyl group from 5-methyltetrahydrofolate to homocysteine resulting in methionine formation. The protein is 5-methyltetrahydropteroyltriglutamate--homocysteine methyltransferase of Coxiella burnetii (strain RSA 331 / Henzerling II).